A 193-amino-acid polypeptide reads, in one-letter code: Fra a 1-associated protein (193 aa).

Residues 1–27 (MGWVWKDDDEQGGHVNPSAADISPRLD) form a disordered region.

Interacts with FRAA1E, FRAA2 and FRAA3.

In Fragaria ananassa (Strawberry), this protein is Fra a 1-associated protein.